We begin with the raw amino-acid sequence, 98 residues long: Co-chaperonin GroES (98 aa).

The protein belongs to the GroES chaperonin family. In terms of assembly, heptamer of 7 subunits arranged in a ring. Interacts with the chaperonin GroEL.

It localises to the cytoplasm. Its function is as follows. Together with the chaperonin GroEL, plays an essential role in assisting protein folding. The GroEL-GroES system forms a nano-cage that allows encapsulation of the non-native substrate proteins and provides a physical environment optimized to promote and accelerate protein folding. GroES binds to the apical surface of the GroEL ring, thereby capping the opening of the GroEL channel. In Rhizobium leguminosarum bv. trifolii (strain WSM2304), this protein is Co-chaperonin GroES.